The primary structure comprises 352 residues: Putative [LysW]-L-2-aminoadipate/[LysW]-L-glutamate phosphate reductase (352 aa).

NADP(+) is bound by residues 10–13 (SGFT) and 34–36 (SRK). Residue cysteine 151 is part of the active site. Asparagine 319 is an NADP(+) binding site.

This sequence belongs to the NAGSA dehydrogenase family. Type 1 subfamily. LysY sub-subfamily.

It localises to the cytoplasm. The enzyme catalyses [amino-group carrier protein]-C-terminal-N-(1-carboxy-5-oxopentan-1-yl)-L-glutamine + phosphate + NADP(+) = [amino-group carrier protein]-C-terminal-N-(1-carboxy-5-phosphooxy-5-oxopentan-1-yl)-L-glutamine + NADPH + H(+). It carries out the reaction [amino-group carrier protein]-C-terminal-gamma-(L-glutamyl-5-semialdehyde)-L-glutamate + phosphate + NADP(+) = [amino-group carrier protein]-C-terminal-gamma-(5-phospho-L-glutamyl)-L-glutamate + NADPH + H(+). It participates in amino-acid biosynthesis; L-lysine biosynthesis via AAA pathway; L-lysine from L-alpha-aminoadipate (Thermus route): step 3/5. The protein operates within amino-acid biosynthesis; L-arginine biosynthesis. Functionally, involved in both the arginine and lysine biosynthetic pathways. This Pyrobaculum neutrophilum (strain DSM 2338 / JCM 9278 / NBRC 100436 / V24Sta) (Thermoproteus neutrophilus) protein is Putative [LysW]-L-2-aminoadipate/[LysW]-L-glutamate phosphate reductase.